The following is a 37-amino-acid chain: Large ribosomal subunit protein bL36 (37 aa).

The protein belongs to the bacterial ribosomal protein bL36 family.

The sequence is that of Large ribosomal subunit protein bL36 from Chromobacterium violaceum (strain ATCC 12472 / DSM 30191 / JCM 1249 / CCUG 213 / NBRC 12614 / NCIMB 9131 / NCTC 9757 / MK).